A 128-amino-acid chain; its full sequence is Aspartate 1-decarboxylase (128 aa).

The Schiff-base intermediate with substrate; via pyruvic acid role is filled by S25. A Pyruvic acid (Ser) modification is found at S25. T57 contacts substrate. The Proton donor role is filled by Y58. Residue 73 to 75 (GSA) participates in substrate binding.

Belongs to the PanD family. In terms of assembly, heterooctamer of four alpha and four beta subunits. The cofactor is pyruvate. In terms of processing, is synthesized initially as an inactive proenzyme, which is activated by self-cleavage at a specific serine bond to produce a beta-subunit with a hydroxyl group at its C-terminus and an alpha-subunit with a pyruvoyl group at its N-terminus.

It is found in the cytoplasm. The enzyme catalyses L-aspartate + H(+) = beta-alanine + CO2. Its pathway is cofactor biosynthesis; (R)-pantothenate biosynthesis; beta-alanine from L-aspartate: step 1/1. Its function is as follows. Catalyzes the pyruvoyl-dependent decarboxylation of aspartate to produce beta-alanine. This chain is Aspartate 1-decarboxylase, found in Burkholderia ambifaria (strain ATCC BAA-244 / DSM 16087 / CCUG 44356 / LMG 19182 / AMMD) (Burkholderia cepacia (strain AMMD)).